Here is a 506-residue protein sequence, read N- to C-terminus: Histone acetyltransferase esa-1 (506 aa).

The segment at 1-24 (MSPPGGDATVGSDEKRQKGKATPD) is disordered. The 53-residue stretch at 26 to 78 (IKMGCIAMVMKEGQLRRAEILSIKDTKSGRQFYCNFDNFNKRLDEWVPAARID) folds into the Tudor-knot domain. Residues 82 to 215 (DVEWPNPDKD…LRTSGSMTQN (134 aa)) are disordered. Basic and acidic residues predominate over residues 87 to 98 (NPDKDKQKDAKT). The span at 109–120 (QPSKKNNQKKAS) shows a compositional bias: basic residues. The span at 167 to 178 (GGDKGVKRKADE) shows a compositional bias: basic and acidic residues. An MYST-type HAT domain is found at 220-494 (SRIRNISKVE…IDPERIQWKP (275 aa)). The C2HC MYST-type zinc-finger motif lies at 253–278 (IYICEFCLSYYGELKSFVRHRQKCTL). The ESA1-RPD3 motif signature appears at 303–324 (RTWCRNLCLLSKMFLDHKTLYY). At Lys-320 the chain carries N6-acetyllysine; by autocatalysis. Acetyl-CoA is bound by residues 361-365 (ACILT) and 370-376 (QRKGYGR). Residue Glu-396 is the Proton donor/acceptor of the active site. Ser-400 contributes to the acetyl-CoA binding site.

This sequence belongs to the MYST (SAS/MOZ) family. In terms of assembly, component of the NuA4 histone acetyltransferase complex. Post-translationally, autoacetylation at Lys-320 is required for proper function.

It is found in the nucleus. The protein resides in the chromosome. It carries out the reaction L-lysyl-[histone] + acetyl-CoA = N(6)-acetyl-L-lysyl-[histone] + CoA + H(+). The catalysed reaction is L-lysyl-[protein] + acetyl-CoA = N(6)-acetyl-L-lysyl-[protein] + CoA + H(+). It catalyses the reaction 2-hydroxyisobutanoyl-CoA + L-lysyl-[protein] = N(6)-(2-hydroxyisobutanoyl)-L-lysyl-[protein] + CoA + H(+). The enzyme catalyses (2E)-butenoyl-CoA + L-lysyl-[protein] = N(6)-(2E)-butenoyl-L-lysyl-[protein] + CoA + H(+). In terms of biological role, catalytic component of the NuA4 histone acetyltransferase (HAT) complex which is involved in epigenetic transcriptional activation of selected genes principally by acetylation of nucleosomal histones H4, H3, H2B, H2A and H2A variant H2A.Z. Acetylates histone H4 to form H4K5ac, H4K8ac, H4K12ac and H4K16ac, histone H3 to form H3K14ac, and histone H2A to form H2AK4ac and H2AK7ac. The NuA4 complex is involved in the DNA damage response and is required for chromosome segregation. The NuA4 complex plays a direct role in repair of DNA double-strand breaks (DSBs) through homologous recombination. Recruitment to promoters depends on H3K4me. Also acetylates non-histone proteins. In addition to protein acetyltransferase, can use different acyl-CoA substrates, such as 2-hydroxyisobutanoyl-CoA (2-hydroxyisobutyryl-CoA) or (2E)-butenoyl-CoA (crotonyl-CoA), and is able to mediate protein 2-hydroxyisobutyrylation and crotonylation, respectively. The chain is Histone acetyltransferase esa-1 (esa-1) from Neurospora crassa (strain ATCC 24698 / 74-OR23-1A / CBS 708.71 / DSM 1257 / FGSC 987).